The primary structure comprises 270 residues: Tetraspanin-17 (270 aa).

The Cytoplasmic segment spans residues 1–19 (MPGKHQQFQDPEVGCCGKY). The helical transmembrane segment at 20–40 (FLFGFNIVFWVLGALFLAIGL) threads the bilayer. The Extracellular segment spans residues 41-63 (WAWGEKGVLSNISALTDLGGLDP). The N-linked (GlcNAc...) asparagine glycan is linked to Asn51. Residues 64 to 84 (VWLFVVVGGVMSVLGFAGCIG) traverse the membrane as a helical segment. Residues 85-94 (ALRENTFLLK) lie on the Cytoplasmic side of the membrane. Residues 95–115 (FFSVFLGLIFFLELAAGILAF) form a helical membrane-spanning segment. Topologically, residues 116-234 (VFKDWIRDQL…GQFEKWLQDN (119 aa)) are extracellular. Cystine bridges form between Cys155/Cys223, Cys156/Cys188, Cys172/Cys182, and Cys189/Cys202. Asn171 carries N-linked (GlcNAc...) asparagine glycosylation. The chain crosses the membrane as a helical span at residues 235–255 (LIVVAGVLVGIALLQIFGLCL). Residues 256–270 (AQNLVSDIKAVKANW) lie on the Cytoplasmic side of the membrane.

This sequence belongs to the tetraspanin (TM4SF) family. In terms of assembly, interacts with ADAM10; the interaction influences ADAM10 substrate specificity, endocytosis and turnover.

The protein localises to the cell membrane. Functionally, part of TspanC8 subgroup, composed of 6 members that interact with the transmembrane metalloprotease ADAM10. This interaction is required for ADAM10 exit from the endoplasmic reticulum and for enzymatic maturation and trafficking to the cell surface as well as substrate specificity. Different TspanC8/ADAM10 complexes have distinct substrates. Seems to regulate VE-cadherin expression in endothelial cells probably through interaction with ADAM10, promoting leukocyte transmigration. This Mus musculus (Mouse) protein is Tetraspanin-17 (Tspan17).